Reading from the N-terminus, the 193-residue chain is Holliday junction branch migration complex subunit RuvA (193 aa).

The domain I stretch occupies residues 1 to 64; that stretch reads MIGRIAGILL…EDAHLLYGFL (64 aa). A domain II region spans residues 65–139; sequence TPQERTTFRE…GKLGADLGAL (75 aa). The interval 139–143 is flexible linker; that stretch reads LAGAA. A domain III region spans residues 144–193; it reads SASDHATDILNALLALGYSEKEGLAAIKNVPAGTGVSEGIKLALKALSKA.

It belongs to the RuvA family. As to quaternary structure, homotetramer. Forms an RuvA(8)-RuvB(12)-Holliday junction (HJ) complex. HJ DNA is sandwiched between 2 RuvA tetramers; dsDNA enters through RuvA and exits via RuvB. An RuvB hexamer assembles on each DNA strand where it exits the tetramer. Each RuvB hexamer is contacted by two RuvA subunits (via domain III) on 2 adjacent RuvB subunits; this complex drives branch migration. In the full resolvosome a probable DNA-RuvA(4)-RuvB(12)-RuvC(2) complex forms which resolves the HJ.

The protein resides in the cytoplasm. Its function is as follows. The RuvA-RuvB-RuvC complex processes Holliday junction (HJ) DNA during genetic recombination and DNA repair, while the RuvA-RuvB complex plays an important role in the rescue of blocked DNA replication forks via replication fork reversal (RFR). RuvA specifically binds to HJ cruciform DNA, conferring on it an open structure. The RuvB hexamer acts as an ATP-dependent pump, pulling dsDNA into and through the RuvAB complex. HJ branch migration allows RuvC to scan DNA until it finds its consensus sequence, where it cleaves and resolves the cruciform DNA. This chain is Holliday junction branch migration complex subunit RuvA, found in Burkholderia cenocepacia (strain HI2424).